We begin with the raw amino-acid sequence, 324 residues long: Bile salt hydrolase/transferase (324 aa).

The Nucleophile; acyl-thioester intermediate role is filled by cysteine 2. 2 residues coordinate deoxycholate: cysteine 2 and arginine 16. Asparagine 79 contributes to the taurine binding site.

This sequence belongs to the peptidase C59 family. In terms of assembly, homotetramer. The tetramer consists of a dimer of dimers.

It carries out the reaction glycocholate + H2O = cholate + glycine. It catalyses the reaction glycodeoxycholate + H2O = deoxycholate + glycine. The catalysed reaction is chenodeoxycholate + glycine = glycochenodeoxycholate + H2O. The enzyme catalyses cholate + taurine = taurocholate + H2O. It carries out the reaction taurodeoxycholate + H2O = deoxycholate + taurine. It catalyses the reaction taurochenodeoxycholate + H2O = chenodeoxycholate + taurine. The catalysed reaction is an L-alpha-amino acid + cholate = an N-choloyl-L-alpha-amino acid + H2O. The enzyme catalyses an L-alpha-amino acid + taurocholate = an N-choloyl-L-alpha-amino acid + taurine. It carries out the reaction glycocholate + an L-alpha-amino acid = an N-choloyl-L-alpha-amino acid + glycine. Its pathway is lipid metabolism; bile acid biosynthesis. Possesses dual functions in bile acid metabolism. Acts as a bile salt hydrolase that catalyzes the deconjugation of glycine- and taurine-linked bile salts, which occurs naturally in the intestines of animals, releasing amino acid residues and deconjugated bile salts (bile acids). Can hydrolyze the amide bond in the bile salts glycocholate (GCA), glycodeoxycholate (GDCA), glycochenodeoxycholate (GCDCA), taurocholate (TCA), taurodeoxycholate (TDCA) and taurochenodeoxycholate (TCDCA). Shows a preference for glycine-conjugated bile acids as substrates. Also acts as an amine N-acyltransferase that conjugates a wide variety of amino acids to conjugated and non-conjugated bile acids, thus producing bacterial bile acid amidates (BBAAs) - also named microbially conjugated bile acids (MCBAs) - in the gastrointestinal tract. These BBAAs may facilitate communication between the microbiota and host through the activation of host ligand-activated transcription factors. This Lactiplantibacillus plantarum (strain ATCC BAA-793 / NCIMB 8826 / WCFS1) (Lactobacillus plantarum) protein is Bile salt hydrolase/transferase.